A 381-amino-acid chain; its full sequence is Queuine tRNA-ribosyltransferase (381 aa).

Asp89 functions as the Proton acceptor in the catalytic mechanism. Substrate is bound by residues 89-93 (DSGGF), Asp143, Gln187, and Gly214. The segment at 245-251 (GVGKPED) is RNA binding. The active-site Nucleophile is Asp264. An RNA binding; important for wobble base 34 recognition region spans residues 269-273 (TRNAR). The Zn(2+) site is built by Cys302, Cys304, Cys307, and His333.

It belongs to the queuine tRNA-ribosyltransferase family. As to quaternary structure, homodimer. Within each dimer, one monomer is responsible for RNA recognition and catalysis, while the other monomer binds to the replacement base PreQ1. The cofactor is Zn(2+).

It catalyses the reaction 7-aminomethyl-7-carbaguanine + guanosine(34) in tRNA = 7-aminomethyl-7-carbaguanosine(34) in tRNA + guanine. It participates in tRNA modification; tRNA-queuosine biosynthesis. In terms of biological role, catalyzes the base-exchange of a guanine (G) residue with the queuine precursor 7-aminomethyl-7-deazaguanine (PreQ1) at position 34 (anticodon wobble position) in tRNAs with GU(N) anticodons (tRNA-Asp, -Asn, -His and -Tyr). Catalysis occurs through a double-displacement mechanism. The nucleophile active site attacks the C1' of nucleotide 34 to detach the guanine base from the RNA, forming a covalent enzyme-RNA intermediate. The proton acceptor active site deprotonates the incoming PreQ1, allowing a nucleophilic attack on the C1' of the ribose to form the product. After dissociation, two additional enzymatic reactions on the tRNA convert PreQ1 to queuine (Q), resulting in the hypermodified nucleoside queuosine (7-(((4,5-cis-dihydroxy-2-cyclopenten-1-yl)amino)methyl)-7-deazaguanosine). This Pectobacterium carotovorum subsp. carotovorum (strain PC1) protein is Queuine tRNA-ribosyltransferase.